A 571-amino-acid polypeptide reads, in one-letter code: Endonuclease/exonuclease/phosphatase family domain-containing protein 1 (571 aa).

Residues 1 to 20 (MGSTLGCHRSIPRDPSDLSH) are disordered. Gly2 is lipidated: N-myristoyl glycine. Residues 11-20 (IPRDPSDLSH) are compositionally biased toward basic and acidic residues. Residues Ser16, Ser21, and Ser25 each carry the phosphoserine modification. In terms of domain architecture, HhH spans 38–67 (ERLNINTATEEELMTLPGVTRAVARSIVEY). A phosphoserine mark is found at Ser106, Ser110, Ser162, and Ser175. A disordered region spans residues 202–227 (SRPPSTHTNGGLTFTAKPHPSPTSLS). The span at 204–213 (PPSTHTNGGL) shows a compositional bias: polar residues. Thr267 bears the Phosphothreonine mark. Ser430 carries the post-translational modification Phosphoserine. The interval 548–571 (RKEGPRSGNGLTLERSEANIKHER) is disordered. Basic and acidic residues predominate over residues 561–571 (ERSEANIKHER).

The sequence is that of Endonuclease/exonuclease/phosphatase family domain-containing protein 1 (EEPD1) from Bos taurus (Bovine).